A 107-amino-acid polypeptide reads, in one-letter code: Small ribosomal subunit protein bS16m (107 aa).

The protein belongs to the bacterial ribosomal protein bS16 family. In terms of assembly, component of the mitochondrial small ribosomal subunit (mt-SSU). Mature N.crassa 74S mitochondrial ribosomes consist of a small (37S) and a large (54S) subunit. The 37S small subunit contains a 16S ribosomal RNA (16S mt-rRNA) and 32 different proteins. The 54S large subunit contains a 23S rRNA (23S mt-rRNA) and 42 different proteins.

The protein localises to the mitochondrion. Its function is as follows. Component of the mitochondrial ribosome (mitoribosome), a dedicated translation machinery responsible for the synthesis of mitochondrial genome-encoded proteins, including at least some of the essential transmembrane subunits of the mitochondrial respiratory chain. The mitoribosomes are attached to the mitochondrial inner membrane and translation products are cotranslationally integrated into the membrane. The protein is Small ribosomal subunit protein bS16m (cyt-21) of Neurospora crassa (strain ATCC 24698 / 74-OR23-1A / CBS 708.71 / DSM 1257 / FGSC 987).